Here is a 615-residue protein sequence, read N- to C-terminus: UvrABC system protein C (615 aa).

One can recognise a GIY-YIG domain in the interval 12–91; it reads EKPGVYIMKD…IKKYKPKYNV (80 aa). Positions 203 to 238 constitute a UVR domain; the sequence is DWLIQKLKEDMKKAAEELRFEEAARIRDQIFAIERT.

This sequence belongs to the UvrC family. As to quaternary structure, interacts with UvrB in an incision complex.

The protein resides in the cytoplasm. The UvrABC repair system catalyzes the recognition and processing of DNA lesions. UvrC both incises the 5' and 3' sides of the lesion. The N-terminal half is responsible for the 3' incision and the C-terminal half is responsible for the 5' incision. In Thermoanaerobacter sp. (strain X514), this protein is UvrABC system protein C.